A 155-amino-acid polypeptide reads, in one-letter code: Small ribosomal subunit protein bS6 (155 aa).

Positions 115-137 are enriched in basic and acidic residues; the sequence is EADAAKAEADAARVEAEAKKAET. The interval 115–155 is disordered; that stretch reads EADAAKAEADAARVEAEAKKAETDETDETVDAETPENEEEN. Residues 138–155 are compositionally biased toward acidic residues; the sequence is DETDETVDAETPENEEEN.

This sequence belongs to the bacterial ribosomal protein bS6 family.

Its function is as follows. Binds together with bS18 to 16S ribosomal RNA. The sequence is that of Small ribosomal subunit protein bS6 from Desulforapulum autotrophicum (strain ATCC 43914 / DSM 3382 / VKM B-1955 / HRM2) (Desulfobacterium autotrophicum).